The chain runs to 506 residues: Aldehyde dehydrogenase [NAD(P)+] 2 (506 aa).

The active-site Proton acceptor is the Glu-268. Cys-302 serves as the catalytic Nucleophile.

Belongs to the aldehyde dehydrogenase family.

The protein localises to the cytoplasm. The enzyme catalyses an aldehyde + NAD(+) + H2O = a carboxylate + NADH + 2 H(+). The catalysed reaction is 3-aminopropanal + NAD(+) + H2O = beta-alanine + NADH + 2 H(+). In terms of biological role, cytoplasmic aldehyde dehydrogenase involved in ethanol oxidation. Involved in pantothenic acid production through the conversion of 3-aminopropanal to beta-alanine, an intermediate in pantothenic acid (vitamin B5) and coenzyme A (CoA) biosynthesis. This is Aldehyde dehydrogenase [NAD(P)+] 2 (ALD3) from Saccharomyces cerevisiae (strain ATCC 204508 / S288c) (Baker's yeast).